A 181-amino-acid polypeptide reads, in one-letter code: Type II secretion system protein H (181 aa).

A propeptide spans 1–5 (MRQRG) (leader sequence). Position 6 is an N-methylphenylalanine (Phe-6). Residues 6–29 (FTLLEIMLVVLLAGVAATLVMMAI) traverse the membrane as a helical segment.

It belongs to the GSP H family. As to quaternary structure, type II secretion is composed of four main components: the outer membrane complex, the inner membrane complex, the cytoplasmic secretion ATPase and the periplasm-spanning pseudopilus. Interacts with core component OutG. In terms of processing, cleaved by prepilin peptidase. Methylated by prepilin peptidase at the amino group of the N-terminal phenylalanine once the leader sequence is cleaved by prepilin peptidase.

It is found in the cell inner membrane. Functionally, component of the type II secretion system required for the energy-dependent secretion of extracellular factors such as proteases and toxins from the periplasm. Part of the pseudopilus tip complex that is critical for the recognition and binding of secretion substrates. This Dickeya chrysanthemi (Pectobacterium chrysanthemi) protein is Type II secretion system protein H (outH).